The primary structure comprises 545 residues: B3 domain-containing protein Os03g0620500 (545 aa).

A DNA-binding region (TF-B3 1) is located at residues 26 to 119 (MKCFHRQMSA…RRASGVQERN (94 aa)). The interval 111-188 (RASGVQERNA…SSSEHESSYD (78 aa)) is disordered. The span at 173–186 (EEAKESSSSEHESS) shows a compositional bias: basic and acidic residues. Residues 231-331 (VTTMKHSNVN…RATVHLLRET (101 aa)) constitute a DNA-binding region (TF-B3 2). The segment at 368–400 (RRGTMEPSTTNVKKEADNEQCNNGQGKRQEPLN) is disordered. The segment at residues 441 to 542 (YVSIMNKSNV…AMKVHIIRHN (102 aa)) is a DNA-binding region (TF-B3 3).

It is found in the nucleus. The sequence is that of B3 domain-containing protein Os03g0620500 from Oryza sativa subsp. japonica (Rice).